A 356-amino-acid chain; its full sequence is DNA-directed RNA polymerase subunit alpha (356 aa).

The tract at residues 1–259 (MIKAAATLKS…KLMTACLTTL (259 aa)) is alpha N-terminal domain (alpha-NTD). The segment at 277–356 (FVQVNYNKME…STYGIELKED (80 aa)) is alpha C-terminal domain (alpha-CTD).

This sequence belongs to the RNA polymerase alpha chain family. In plastids the minimal PEP RNA polymerase catalytic core is composed of four subunits: alpha, beta, beta', and beta''. When a (nuclear-encoded) sigma factor is associated with the core the holoenzyme is formed, which can initiate transcription.

It localises to the plastid. Its subcellular location is the chloroplast. The enzyme catalyses RNA(n) + a ribonucleoside 5'-triphosphate = RNA(n+1) + diphosphate. Its function is as follows. DNA-dependent RNA polymerase catalyzes the transcription of DNA into RNA using the four ribonucleoside triphosphates as substrates. The chain is DNA-directed RNA polymerase subunit alpha from Ostreococcus tauri.